Reading from the N-terminus, the 127-residue chain is Large ribosomal subunit protein bL12 (127 aa).

The protein belongs to the bacterial ribosomal protein bL12 family. As to quaternary structure, homodimer. Part of the ribosomal stalk of the 50S ribosomal subunit. Forms a multimeric L10(L12)X complex, where L10 forms an elongated spine to which 2 to 4 L12 dimers bind in a sequential fashion. Binds GTP-bound translation factors.

Its function is as follows. Forms part of the ribosomal stalk which helps the ribosome interact with GTP-bound translation factors. Is thus essential for accurate translation. In Nitratiruptor sp. (strain SB155-2), this protein is Large ribosomal subunit protein bL12.